Reading from the N-terminus, the 556-residue chain is Glypican-4 (556 aa).

The first 18 residues, 1 to 18, serve as a signal peptide directing secretion; that stretch reads MARFGLPALLCTLAVLSA. Residue S357 is modified to Phosphoserine. 3 O-linked (Xyl...) (glycosaminoglycan) serine glycosylation sites follow: S494, S498, and S500. Residue N514 is glycosylated (N-linked (GlcNAc...) asparagine). S529 is lipidated: GPI-anchor amidated serine. Positions 530-556 are cleaved as a propeptide — removed in mature form; it reads AGVRPGAQAYLLTVFCILFLVMQREWR.

This sequence belongs to the glypican family.

The protein resides in the cell membrane. It localises to the secreted. Its subcellular location is the extracellular space. Functionally, cell surface proteoglycan that bears heparan sulfate. May be involved in the development of kidney tubules and of the central nervous system. This is Glypican-4 (GPC4) from Homo sapiens (Human).